Here is a 175-residue protein sequence, read N- to C-terminus: Thioredoxin-like protein CITRX, chloroplastic (175 aa).

The transit peptide at 1–73 directs the protein to the chloroplast; it reads MQAASLAFHP…REDYLVKKLS (73 aa). The 102-residue stretch at 74 to 175 folds into the Thioredoxin domain; that stretch reads AKEIQELIKG…MMRDIINNDL (102 aa). Residues C98 and C101 each act as nucleophile in the active site. C98 and C101 form a disulfide bridge.

The protein belongs to the thioredoxin family. Plant CITRX-type subfamily.

Its subcellular location is the plastid. The protein resides in the chloroplast. Its function is as follows. Probable thiol-disulfide oxidoreductase that may play a role in proper chloroplast development. The polypeptide is Thioredoxin-like protein CITRX, chloroplastic (Solanum tuberosum (Potato)).